Reading from the N-terminus, the 459-residue chain is Bifunctional protein GlmU (459 aa).

Residues 1–229 (MTNYAIILAA…FDESLGVNDR (229 aa)) are pyrophosphorylase. UDP-N-acetyl-alpha-D-glucosamine contacts are provided by residues 8–11 (LAAG), Lys22, Gln72, and 77–78 (GT). Mg(2+) is bound at residue Asp102. 4 residues coordinate UDP-N-acetyl-alpha-D-glucosamine: Gly139, Glu154, Asn169, and Asn227. Mg(2+) is bound at residue Asn227. The interval 230–250 (VALAKAEKVMRRRINHAHMVN) is linker. The N-acetyltransferase stretch occupies residues 251–459 (GVTLTNPAST…KKKPHHPNNK (209 aa)). Positions 332 and 350 each coordinate UDP-N-acetyl-alpha-D-glucosamine. His362 acts as the Proton acceptor in catalysis. UDP-N-acetyl-alpha-D-glucosamine-binding residues include Tyr365 and Asn376. Residues Ala379, 385 to 386 (NY), Ser404, Ala422, and Arg439 contribute to the acetyl-CoA site.

The protein in the N-terminal section; belongs to the N-acetylglucosamine-1-phosphate uridyltransferase family. This sequence in the C-terminal section; belongs to the transferase hexapeptide repeat family. As to quaternary structure, homotrimer. Requires Mg(2+) as cofactor.

The protein resides in the cytoplasm. It catalyses the reaction alpha-D-glucosamine 1-phosphate + acetyl-CoA = N-acetyl-alpha-D-glucosamine 1-phosphate + CoA + H(+). The enzyme catalyses N-acetyl-alpha-D-glucosamine 1-phosphate + UTP + H(+) = UDP-N-acetyl-alpha-D-glucosamine + diphosphate. It functions in the pathway nucleotide-sugar biosynthesis; UDP-N-acetyl-alpha-D-glucosamine biosynthesis; N-acetyl-alpha-D-glucosamine 1-phosphate from alpha-D-glucosamine 6-phosphate (route II): step 2/2. The protein operates within nucleotide-sugar biosynthesis; UDP-N-acetyl-alpha-D-glucosamine biosynthesis; UDP-N-acetyl-alpha-D-glucosamine from N-acetyl-alpha-D-glucosamine 1-phosphate: step 1/1. It participates in bacterial outer membrane biogenesis; LPS lipid A biosynthesis. Functionally, catalyzes the last two sequential reactions in the de novo biosynthetic pathway for UDP-N-acetylglucosamine (UDP-GlcNAc). The C-terminal domain catalyzes the transfer of acetyl group from acetyl coenzyme A to glucosamine-1-phosphate (GlcN-1-P) to produce N-acetylglucosamine-1-phosphate (GlcNAc-1-P), which is converted into UDP-GlcNAc by the transfer of uridine 5-monophosphate (from uridine 5-triphosphate), a reaction catalyzed by the N-terminal domain. The polypeptide is Bifunctional protein GlmU (Streptococcus mutans serotype c (strain ATCC 700610 / UA159)).